A 330-amino-acid polypeptide reads, in one-letter code: MKVFYDSDFKLDALKEKTIAVIGYGSQGRAQSLNMKDSGLNVVVGLRKNGASWENAKADGHNVMTIEEAAEKADIIHILIPDELQAEVYESQIKPYLKEGKTLSFSHGFNIHYGFIVPPKGVNVVLVAPKSPGKMVRRTYEEGFGVPGLICIEIDATNNAFDIVSAMAKGIGLSRAGVIQTTFKEETETDLFGEQAVLCGGVTELIKAGFETLVEAGYAPEMAYFETCHELKLIVDLIYQKGFKNMWNDVSNTAEYGGLTRRSRIVTADSKAAMKEILKEIQDGRFTKEFVLEKQVNHAHLKAMRRIEGDLQIEEVGAKLRKMCGLEKEE.

Positions 1-181 constitute a KARI N-terminal Rossmann domain; that stretch reads MKVFYDSDFK…GLSRAGVIQT (181 aa). NADP(+) is bound by residues 24–27, arginine 47, serine 52, and 82–85; these read YGSQ and DELQ. The active site involves histidine 107. Glycine 133 contributes to the NADP(+) binding site. The KARI C-terminal knotted domain occupies 182–327; sequence TFKEETETDL…AKLRKMCGLE (146 aa). Mg(2+) contacts are provided by aspartate 190, glutamate 194, glutamate 226, and glutamate 230. Substrate is bound at residue serine 251.

The protein belongs to the ketol-acid reductoisomerase family. Requires Mg(2+) as cofactor.

The catalysed reaction is (2R)-2,3-dihydroxy-3-methylbutanoate + NADP(+) = (2S)-2-acetolactate + NADPH + H(+). The enzyme catalyses (2R,3R)-2,3-dihydroxy-3-methylpentanoate + NADP(+) = (S)-2-ethyl-2-hydroxy-3-oxobutanoate + NADPH + H(+). The protein operates within amino-acid biosynthesis; L-isoleucine biosynthesis; L-isoleucine from 2-oxobutanoate: step 2/4. Its pathway is amino-acid biosynthesis; L-valine biosynthesis; L-valine from pyruvate: step 2/4. In terms of biological role, involved in the biosynthesis of branched-chain amino acids (BCAA). Catalyzes an alkyl-migration followed by a ketol-acid reduction of (S)-2-acetolactate (S2AL) to yield (R)-2,3-dihydroxy-isovalerate. In the isomerase reaction, S2AL is rearranged via a Mg-dependent methyl migration to produce 3-hydroxy-3-methyl-2-ketobutyrate (HMKB). In the reductase reaction, this 2-ketoacid undergoes a metal-dependent reduction by NADPH to yield (R)-2,3-dihydroxy-isovalerate. The sequence is that of Ketol-acid reductoisomerase (NADP(+)) from Methanococcus maripaludis (strain C5 / ATCC BAA-1333).